The primary structure comprises 277 residues: MPADSMEKPTASPIAGAPANSAQTPDKPKSASEHRKSSKPIMEKRRRARINESLGQLKTLILDALKKDSSRHSKLEKADILEMTVKHLRNLQRVQMTAALTADPSVLGKYRAGFNECMNEVTRFLSTCEGVNTEVRTRLLGHLSSCLGQIVAMNYQQPPSSQQPVHVQLPSSTPVPMPCKVNPAEAISPKVFQGGFQLVPATDGQFAFLIPNPAYTSSPGPVIPLYANATSPGGPPSQSPVQGLTSFAHKMPHMAQAVSPLGGSTRADSAESVWRPW.

The segment at 1-44 is disordered; that stretch reads MPADSMEKPTASPIAGAPANSAQTPDKPKSASEHRKSSKPIMEK. The span at 26–35 shows a compositional bias: basic and acidic residues; sequence DKPKSASEHR. Residues 34 to 91 form the bHLH domain; that stretch reads HRKSSKPIMEKRRRARINESLGQLKTLILDALKKDSSRHSKLEKADILEMTVKHLRNL. One can recognise an Orange domain in the interval 110–143; it reads YRAGFNECMNEVTRFLSTCEGVNTEVRTRLLGHL. The disordered stretch occupies residues 258-277; it reads VSPLGGSTRADSAESVWRPW. The short motif at 274–277 is the WRPW motif element; it reads WRPW.

In terms of assembly, transcription repression requires formation of a complex with a corepressor protein of the Groucho/TLE family. Interacts with the bHLH protein hes6; this interaction may inhibit the transcriptional repressor activity. Binds DNA in the form of a heterodimer with the bHLH protein hey1/hrt1. Interacts (via Orange domain) with id3 (via HLH domain). Dynamically expressed in the borders of several tissue territories. Expressed in the pre-placodal ectoderm (PPE) from gastrula stage. During gastrulation, expressed in the deep layer of the dorsal lip, the Spemann organizer and three distinct regions in the prospective neuroectoderm: neural plate border, presumptive floor plate/notoplate and anterior neural plate. At later stages, expression is localized to the anterior of the prechordal plate, the presomitic mesoderm, neural tube, neural crest derivatives and several tissues of the central nervous system, with expression in the developing floor plate continues to at least the tadpole stage. From the early tailbud stage, expressed in the dorsoanterior region of the developing pronephros. During early tailbud stages, broadly expressed within the pronephric mesoderm. and in the sensorial layer of the ectoderm covering the pronephros anlagen. During late tailbud to early tadpole stages, expressed in the ventral region of the pronephros. Expression remains in the proximal and distal tubules at late tadpole stages (stage 35).

Its subcellular location is the nucleus. Its function is as follows. Transcriptional repressor. Binds DNA on N-box motifs: 5'-CACNAG-3'. Promotes floor plate development and prechordal plate development. Required for lens development as early as the stage of lens field formation, partly through regulation of gene expression of the cell cycle inhibitor cdknx/p27(xic1). Required for formation of the neural crest downstream of multiple signaling pathways, and acts at the neural plate border via both DNA-binding dependent and independent mechanisms; acts in a DNA-binding dependent manner to repress pro-apoptotic and neural crest differentiation genes, including id3, delta1, and cdknx/p27(xic1), and thus promote the cell survival of neural plate border cells and maintain them in an undifferentiated state. Represses transcription of id3, at least in part through the repression of bmp4. On the other hand, acts in a DNA-independent manner separate from the transcriptional repressor function, to stimulate cell proliferation and promote neural crest formation. Via this DNA-independent route, acts in neurulae upstream of stat3 to transiently up-regulate the notch ligand dll1/delta1, which in turn up-regulates id3 expression. Then interacts directly with id3, which blocks the transcriptional repressor function of hes4-B/hairy2b to allow the progression of neural crest progenitors through specification and differentiation. Also acts via repressor-dependent and repressor-independent mechanisms in early gastrulae to establish the prospective anterior prechordal mesoderm identity in the Spemann organizer; induces specific genes independently from direct transcriptional regulation, and represses the genes specific for neighboring tissues through direct transcriptional repression. Modulates lateral inhibition during notch signaling and regulates the cell context dependent effects of notch (which can have inhibitory, permissive or enhancing roles in muscle or neural differentiation). Inhibits myogenesis. The sequence is that of Transcription factor HES-4-B (hes4-b) from Xenopus laevis (African clawed frog).